We begin with the raw amino-acid sequence, 69 residues long: MGNRTKEDELYREMCRVVGKVVLEMRDLGQEPKHIVIAGVLRTALANKRIQRSELEKQAMETVINALVK.

The protein belongs to the FumD family.

The catalysed reaction is (S)-malate = fumarate + H2O. In terms of biological role, in vitro catalyzes the addition of water to fumarate, forming malate. Cannot catalyze the reverse reaction. Cannot use the cis-isomer maleate as substrate. This Shigella flexneri protein is Fumarase D.